We begin with the raw amino-acid sequence, 530 residues long: RNA-binding protein 39 (530 aa).

The disordered stretch occupies residues 1–146 (MADDIDIEAM…PVREPIDNLT (146 aa)). The residue at position 2 (Ala2) is an N-acetylalanine. Residues 14-32 (PYKKDENKLNSANGHEERS) are compositionally biased toward basic and acidic residues. 2 stretches are compositionally biased toward basic residues: residues 33–56 (KKRK…KERK) and 64–95 (KKSK…RGRY). Position 95 is a phosphotyrosine (Tyr95). 2 positions are modified to phosphoserine: Ser97 and Ser100. Lys111 participates in a covalent cross-link: Glycyl lysine isopeptide (Lys-Gly) (interchain with G-Cter in SUMO2). Phosphoserine is present on Ser117. A Glycyl lysine isopeptide (Lys-Gly) (interchain with G-Cter in SUMO2) cross-link involves residue Lys119. Residues 119-130 (KLSRRRSRSKSP) show a composition bias toward basic residues. Residues Ser121 and Ser136 each carry the phosphoserine modification. Residues 131 to 146 (FRKDKSPVREPIDNLT) show a composition bias toward basic and acidic residues. The residue at position 146 (Thr146) is a Phosphothreonine. The RRM 1 domain maps to 153-230 (RTVFCMQLAA…VPIIVQASQA (78 aa)). A Glycyl lysine isopeptide (Lys-Gly) (interchain with G-Cter in SUMO2) cross-link involves residue Lys244. Residues 250-328 (MRLYVGSLHF…RPMKVGHVTE (79 aa)) form the RRM 2 domain. The segment at 291 to 355 (KGYGFITFSD…RTGIDLGTTG (65 aa)) is activating domain. Residues 291-406 (KGYGFITFSD…IDLQTRLSQQ (116 aa)) are interaction with JUN. Phosphoserine occurs at positions 334, 337, and 341. Positions 355 to 406 (GRLQLMARLAEGTGLQIPPAAQQALQMSGSLAFGAVAEFSFVIDLQTRLSQQ) are interaction with ESR1 and ESR2. The interaction with NCOA6 stretch occupies residues 406 to 530 (QTEASALAAA…ATQLLVPSRR (125 aa)). The RRM 3 domain maps to 445-508 (EIKDDVIEEC…KMITAAYVPL (64 aa)).

This sequence belongs to the splicing factor SR family. Interacts with NCOA6 and JUN. Interacts with ESR1 and ESR2, in the presence of estradiol (E2). Interacts with RSRC1 (via Arg/Ser-rich domain). Interacts with SF3B1. Interacts with ZNF106 (via N-terminus).

It localises to the nucleus. RNA-binding protein that acts as a pre-mRNA splicing factor. Acts by promoting exon inclusion via regulation of exon cassette splicing. Also acts as a transcriptional coactivator for steroid nuclear receptors ESR1/ER-alpha and ESR2/ER-beta, and JUN/AP-1, independently of the pre-mRNA splicing factor activity. In Mus musculus (Mouse), this protein is RNA-binding protein 39 (Rbm39).